A 755-amino-acid polypeptide reads, in one-letter code: 17S U2 SnRNP complex component HTATSF1 (755 aa).

Disordered stretches follow at residues 1 to 53 (MSGT…YEWD) and 81 to 122 (GASS…KAES). S2 carries the N-acetylserine modification. Residues 90–122 (EDVHARTAEEPPQEKAPEPTDARKKGEKRKAES) show a composition bias toward basic and acidic residues. 2 consecutive RRM domains span residues 133–218 (TNVY…VAKF) and 264–349 (RVVI…AWDG). Residues 259–353 (RMRHERVVII…AQAWDGTTDY (95 aa)) form a U2AF homology motif (UHM) region. K297 is modified (N6-acetyllysine). A disordered region spans residues 380–415 (RGLRRSDSVSASERAGPSRARHFSEHPSTSKMNAQE). Residues 381-755 (GLRRSDSVSA…LSSDDDDDDI (375 aa)) form a mediates interaction with the P-TEFb complex region. S387, S403, S407, and S409 each carry phosphoserine. Residues 405–415 (HPSTSKMNAQE) are compositionally biased toward polar residues. Residues K429 and K430 each participate in a glycyl lysine isopeptide (Lys-Gly) (interchain with G-Cter in SUMO2) cross-link. A disordered region spans residues 433–755 (KTEDGGEFEE…LSSDDDDDDI (323 aa)). A phosphoserine mark is found at S445, S452, and S453. Basic and acidic residues predominate over residues 462-476 (CPEKESEEGCPKRGF). A phosphoserine mark is found at S481, S485, S494, S498, S521, and S529. Over residues 508-538 (LKNDCEENGLAKESEDDLNKESEEEVGPTKE) the composition is skewed to basic and acidic residues. Over residues 539-552 (SEEDDSEKESDEDC) the composition is skewed to acidic residues. A compositionally biased stretch (basic and acidic residues) spans 553 to 563 (SEKQSEDGSER). Residues S557, S561, and S579 each carry the phosphoserine modification. A compositionally biased stretch (acidic residues) spans 564 to 579 (EFEENGLEKDLDEEGS). Basic and acidic residues predominate over residues 580-590 (EKELHENVLDK). Acidic residues predominate over residues 591 to 606 (ELEENDSENSEFEDDG). S597, S600, S607, S616, and S624 each carry phosphoserine. Acidic residues-rich tracts occupy residues 613–633 (EEGSEREFDEDSDEKEEEEDT) and 640–651 (DESDEKEDEEYA). T633 bears the Phosphothreonine mark. Phosphoserine is present on S642. A compositionally biased stretch (basic and acidic residues) spans 652-674 (DEKGLEAADKKAEEGDADEKLFE). A compositionally biased stretch (acidic residues) spans 675–713 (ESDDKEDEDADGKEVEDADEKLFEDDDSNEKLFDEEEDS). Residues S676, S702, S713, S714, and S721 each carry the phosphoserine modification. Positions 714-725 (SEKLFDDSDERG) are enriched in basic and acidic residues. Phosphoserine; by CK2 is present on S748.

It belongs to the HTATSF1 family. In terms of assembly, component of the 17S U2 SnRNP complex, a ribonucleoprotein complex that contains small nuclear RNA (snRNA) U2 and a number of specific proteins. Within the 17S U2 SnRNP complex, interacts (via UHM region) directly with SF3B1. Component of a complex which is at least composed of HTATSF1/Tat-SF1, the P-TEFb complex components CDK9 and CCNT1, RNA polymerase II, SUPT5H, and NCL/nucleolin. Interacts with GTF2F2/RAP30 and POLR2A. Interacts with TCERG1/CA150. Interacts with (poly-ADP-ribosylated) RPA1; promoting HTATSF1 recruitment to DNA damage sites. Interacts (when phosphorylated) with TOPBP1; promoting recruitment of TOPBP1 to DNA damage sites during S-phase. Phosphorylation at Ser-748 by CK2 during S-phase in response to DNA damage promotes interaction with TOPBP1 and double-strand break (DSB) repair via homologous recombination. As to expression, widely expressed.

The protein localises to the nucleus. Its subcellular location is the chromosome. In terms of biological role, component of the 17S U2 SnRNP complex of the spliceosome, a large ribonucleoprotein complex that removes introns from transcribed pre-mRNAs. The 17S U2 SnRNP complex (1) directly participates in early spliceosome assembly and (2) mediates recognition of the intron branch site during pre-mRNA splicing by promoting the selection of the pre-mRNA branch-site adenosine, the nucleophile for the first step of splicing. Within the 17S U2 SnRNP complex, HTATSF1 is required to stabilize the branchpoint-interacting stem loop. HTATSF1 is displaced from the 17S U2 SnRNP complex before the stable addition of the 17S U2 SnRNP complex to the spliceosome, destabilizing the branchpoint-interacting stem loop and allowing to probe intron branch site sequences. Also acts as a regulator of transcriptional elongation, possibly by mediating the reciprocal stimulatory effect of splicing on transcriptional elongation. Involved in double-strand break (DSB) repair via homologous recombination in S-phase by promoting the recruitment of TOPBP1 to DNA damage sites. Mechanistically, HTATSF1 is (1) recruited to DNA damage sites in S-phase via interaction with poly-ADP-ribosylated RPA1 and (2) phosphorylated by CK2, promoting recruitment of TOPBP1, thereby facilitating RAD51 nucleofilaments formation and RPA displacement, followed by homologous recombination. Its function is as follows. (Microbial infection) In case of infection by HIV-1, it is up-regulated by the HIV-1 proteins NEF and gp120, acts as a cofactor required for the Tat-enhanced transcription of the virus. The chain is 17S U2 SnRNP complex component HTATSF1 from Homo sapiens (Human).